Reading from the N-terminus, the 196-residue chain is Guanylate kinase (196 aa).

The Guanylate kinase-like domain occupies Gly8–Ala191. Gly15–Gly22 contributes to the ATP binding site.

Belongs to the guanylate kinase family.

It is found in the cytoplasm. The catalysed reaction is GMP + ATP = GDP + ADP. Essential for recycling GMP and indirectly, cGMP. In Bifidobacterium longum (strain NCC 2705), this protein is Guanylate kinase.